Consider the following 179-residue polypeptide: Large ribosomal subunit protein uL5 (179 aa).

Belongs to the universal ribosomal protein uL5 family. Part of the 50S ribosomal subunit; part of the 5S rRNA/L5/L18/L25 subcomplex. Contacts the 5S rRNA and the P site tRNA. Forms a bridge to the 30S subunit in the 70S ribosome.

Its function is as follows. This is one of the proteins that bind and probably mediate the attachment of the 5S RNA into the large ribosomal subunit, where it forms part of the central protuberance. In the 70S ribosome it contacts protein S13 of the 30S subunit (bridge B1b), connecting the 2 subunits; this bridge is implicated in subunit movement. Contacts the P site tRNA; the 5S rRNA and some of its associated proteins might help stabilize positioning of ribosome-bound tRNAs. This Clostridium beijerinckii (strain ATCC 51743 / NCIMB 8052) (Clostridium acetobutylicum) protein is Large ribosomal subunit protein uL5.